Consider the following 375-residue polypeptide: EP300-interacting inhibitor of differentiation 3 (375 aa).

Positions 23–51 form a coiled coil; sequence AWQHLVKQEEEEAVKKEEKEEGEDEEEEG. The interval 30–68 is disordered; it reads QEEEEAVKKEEKEEGEDEEEEGSDSSSDDPNPEPPCMHP. The span at 42–60 shows a compositional bias: acidic residues; that stretch reads EEGEDEEEEGSDSSSDDPN.

The protein belongs to the NSE4 family. Component of the SMC5-SMC6 complex which consists at least of SMC5, SMC6, NSMCE2, NSMCE1, NSMCE4A or EID3 and NSMCE3; EID3 seems to be a testis-specific subunit. NSMCE1, NSMCE4A or EID3 and NSMCE3 probably form a subcomplex that bridges the head domains of the SMC5:SMC6 heterodimer. Homodimer, and heterodimer with EID2. Interacts with the C-terminal region of CREBBP.

The protein localises to the nucleus. It localises to the cytoplasm. The protein resides in the chromosome. Its subcellular location is the telomere. Functionally, tissue-specific component of the SMC5-SMC6 complex, a complex involved in repair of DNA double-strand breaks by homologous recombination. The complex may promote sister chromatid homologous recombination by recruiting the SMC1-SMC3 cohesin complex to double-strand breaks. The complex is required for telomere maintenance via recombination and mediates sumoylation of shelterin complex (telosome) components. Its function is as follows. Acts as a repressor of nuclear receptor-dependent transcription possibly by interfering with CREBBP-dependent coactivation. May function as a coinhibitor of other CREBBP/EP300-dependent transcription factors. The polypeptide is EP300-interacting inhibitor of differentiation 3 (Mus musculus (Mouse)).